A 309-amino-acid polypeptide reads, in one-letter code: Homoserine O-succinyltransferase (309 aa).

Cys142 (acyl-thioester intermediate) is an active-site residue. Substrate is bound by residues Lys163 and Ser192. Residue His235 is the Proton acceptor of the active site. Glu237 is a catalytic residue. Arg249 contributes to the substrate binding site.

The protein belongs to the MetA family.

The protein resides in the cytoplasm. The enzyme catalyses L-homoserine + succinyl-CoA = O-succinyl-L-homoserine + CoA. It participates in amino-acid biosynthesis; L-methionine biosynthesis via de novo pathway; O-succinyl-L-homoserine from L-homoserine: step 1/1. In terms of biological role, transfers a succinyl group from succinyl-CoA to L-homoserine, forming succinyl-L-homoserine. This chain is Homoserine O-succinyltransferase, found in Proteus mirabilis (strain HI4320).